A 209-amino-acid chain; its full sequence is Ribulose-phosphate 3-epimerase (209 aa).

Ser8 is a binding site for substrate. Positions 33, 35, 64, and 170 each coordinate a divalent metal cation. Asp35 functions as the Proton acceptor in the catalytic mechanism. Substrate-binding positions include His64, 170–172 (DGG), and 191–192 (GS). Residue Asp170 is the Proton donor of the active site.

This sequence belongs to the ribulose-phosphate 3-epimerase family. The cofactor is a divalent metal cation.

The catalysed reaction is D-ribulose 5-phosphate = D-xylulose 5-phosphate. It functions in the pathway carbohydrate degradation. Its function is as follows. Catalyzes the reversible epimerization of D-ribulose 5-phosphate to D-xylulose 5-phosphate. In Mycoplasma genitalium (strain ATCC 33530 / DSM 19775 / NCTC 10195 / G37) (Mycoplasmoides genitalium), this protein is Ribulose-phosphate 3-epimerase.